The sequence spans 811 residues: Glycerol-3-phosphate acyltransferase (811 aa).

The HXXXXD motif signature appears at 305–310; that stretch reads CHRSHI.

This sequence belongs to the GPAT/DAPAT family.

It localises to the cell inner membrane. The catalysed reaction is sn-glycerol 3-phosphate + an acyl-CoA = a 1-acyl-sn-glycero-3-phosphate + CoA. Its pathway is phospholipid metabolism; CDP-diacylglycerol biosynthesis; CDP-diacylglycerol from sn-glycerol 3-phosphate: step 1/3. The sequence is that of Glycerol-3-phosphate acyltransferase from Histophilus somni (strain 129Pt) (Haemophilus somnus).